Here is a 288-residue protein sequence, read N- to C-terminus: Probable syndecan (288 aa).

A signal peptide spans 1–26 (MILKLNFCLSTYSVLILLSLSTQAFA). Topologically, residues 27–231 (ANQAKTKVVP…ETLANGFYAA (205 aa)) are extracellular. The tract at residues 67–175 (EVNGSGYPTD…NIHNDEDFFT (109 aa)) is disordered. N-linked (GlcNAc...) asparagine glycosylation is present at N69. 2 O-linked (Xyl...) (glycosaminoglycan) serine glycosylation sites follow: S71 and S86. The span at 89–104 (PPSSATTKSDKVTSPS) shows a compositional bias: polar residues. Residues 106 to 124 (AVVTAKPTTVPTTTASFKP) show a composition bias toward low complexity. Positions 141-164 (VEEDEDDDEDEDEDDEDDEEDFAD) are enriched in acidic residues. O-linked (Xyl...) (glycosaminoglycan) serine glycosylation is present at S214. The helical transmembrane segment at 232-252 (IAGGVLVAVITAILLVLFVVF) threads the bilayer. At 253–288 (RIRKKDEGSYALDEPKQARPYASYGYTKASTKEFYA) the chain is on the cytoplasmic side.

It belongs to the syndecan proteoglycan family.

Its subcellular location is the membrane. It localises to the cell surface. The protein localises to the cell junction. The protein resides in the cytoplasm. Cell surface proteoglycan that bears heparan sulfate. Required for correct mitotic spindle orientation of the ABar blastomere division plane and this may be through modulation of astral microtubule array, and in association with the wnt-signaling proteins mig-5 and dsh-2. Involved in the migration of AQR and PQR neurons, which descend from the Q neuroblasts. Promotes the axon guidance of D-type motor neurons. This Caenorhabditis elegans protein is Probable syndecan.